The sequence spans 431 residues: Tol-Pal system protein TolB (431 aa).

An N-terminal signal peptide occupies residues 1–26 (MSLMTKLGFRALVASCLITAGSAANA). The interval 406–431 (DGSAPPQILSVQGGSVREPSWGPFMQ) is disordered.

It belongs to the TolB family. As to quaternary structure, the Tol-Pal system is composed of five core proteins: the inner membrane proteins TolA, TolQ and TolR, the periplasmic protein TolB and the outer membrane protein Pal. They form a network linking the inner and outer membranes and the peptidoglycan layer.

The protein localises to the periplasm. In terms of biological role, part of the Tol-Pal system, which plays a role in outer membrane invagination during cell division and is important for maintaining outer membrane integrity. The chain is Tol-Pal system protein TolB from Burkholderia cenocepacia (strain HI2424).